The following is a 565-amino-acid chain: NAD-dependent malic enzyme (565 aa).

Residue tyrosine 104 is the Proton donor of the active site. Residue arginine 157 participates in NAD(+) binding. The Proton acceptor role is filled by lysine 175. The a divalent metal cation site is built by glutamate 246, aspartate 247, and aspartate 270. Residues aspartate 270 and asparagine 418 each coordinate NAD(+).

This sequence belongs to the malic enzymes family. In terms of assembly, homotetramer. It depends on Mg(2+) as a cofactor. Mn(2+) is required as a cofactor.

It catalyses the reaction (S)-malate + NAD(+) = pyruvate + CO2 + NADH. The catalysed reaction is oxaloacetate + H(+) = pyruvate + CO2. The chain is NAD-dependent malic enzyme from Salmonella heidelberg (strain SL476).